A 184-amino-acid polypeptide reads, in one-letter code: MTKQYMTHRCLIAPPEMADDFFANTVIYLARHDEEGAQGIIINRPAGIQIKELLNDLDIDADNVNPHEVLQGGPLRPEAGFVLHTGQPTWHSSIAVGENVCITTSKDILDAIAHNEGVGRYQIALGYASWGKNQLEDEIARGDWLICDADMDLIFNLPYDDRWDAAYKKIGVDRTWLASEIGHA.

It belongs to the UPF0301 (AlgH) family.

This is UPF0301 protein ABSDF3201 from Acinetobacter baumannii (strain SDF).